A 611-amino-acid polypeptide reads, in one-letter code: POU domain, class 6, transcription factor 1 (611 aa).

The disordered stretch occupies residues 62–93 (ASQAAGEAGPDNLGSSAEATVKSPPGIPPSPA). Positions 449-523 (EDGINLEEIR…VLEKWLNEAE (75 aa)) constitute a POU-specific domain. The homeobox DNA-binding region spans 544 to 603 (KRKRRTSFTPQAIEALNAYFEKNPLPTGQEITEIAKELNYDREVVRVWFCNRRQTLKNTS).

The protein belongs to the POU transcription factor family. Class-6 subfamily. In the embryo, expressed exclusively in the developing brain, whereas in the adult its expression is restricted to brain, heart, skeletal muscle and lung. In the brain, the highest expression levels are found in specific cell layers of the cortex, the olfactory bulb, the hippocampus and the cerebellum.

The protein localises to the nucleus. In terms of biological role, transcription factor that binds preferentially to a variant of the octamer motif (5'-ATGATAAT-3'). This is POU domain, class 6, transcription factor 1 (POU6F1) from Homo sapiens (Human).